Consider the following 202-residue polypeptide: Type II restriction enzyme MunI (202 aa).

As to quaternary structure, homodimer.

It catalyses the reaction Endonucleolytic cleavage of DNA to give specific double-stranded fragments with terminal 5'-phosphates.. In terms of biological role, a P subtype restriction enzyme that recognizes the double-stranded sequence 5'-CAATTG-3' and cleaves after C-1. This chain is Type II restriction enzyme MunI, found in Mycoplasma sp.